We begin with the raw amino-acid sequence, 154 residues long: Large ribosomal subunit protein uL13 (154 aa).

It belongs to the universal ribosomal protein uL13 family. In terms of assembly, part of the 50S ribosomal subunit.

Functionally, this protein is one of the early assembly proteins of the 50S ribosomal subunit, although it is not seen to bind rRNA by itself. It is important during the early stages of 50S assembly. This is Large ribosomal subunit protein uL13 from Cereibacter sphaeroides (strain ATCC 17029 / ATH 2.4.9) (Rhodobacter sphaeroides).